A 1041-amino-acid polypeptide reads, in one-letter code: Sarcoplasmic/endoplasmic reticulum calcium ATPase 2 (1041 aa).

At 1 to 48 the chain is on the cytoplasmic side; that stretch reads MENAHTKTVEEVLAYFGVNESTGLSLEQVKKLKEKWGSNELPAEEGKT. A helical membrane pass occupies residues 49–69; the sequence is LLELVIEQFEDLLVRILLLAA. At 70 to 89 the chain is on the lumenal side; that stretch reads CISFVLAWFEEGEETITAFV. Residues 90 to 110 traverse the membrane as a helical segment; that stretch reads EPFVILLILVANAIVGVWQER. Residues 111 to 253 are Cytoplasmic-facing; sequence NAENAIEALK…QERTPLQQKL (143 aa). A helical transmembrane segment spans residues 254-273; that stretch reads DEFGEQLSKVISLICIAVWI. Over 274–295 the chain is Lumenal; the sequence is INIGHFNDPVHGGSWIRGAIYY. A helical transmembrane segment spans residues 296-313; it reads FKIAVALAVAAIPEGLPA. Ca(2+)-binding residues include Val304, Ala305, Ile307, and Glu309. Topologically, residues 314-756 are cytoplasmic; sequence VITTCLALGT…EEGRAIYNNM (443 aa). Catalysis depends on Asp351, which acts as the 4-aspartylphosphate intermediate. Asp351 and Thr353 together coordinate Mg(2+). Positions 353, 442, 489, 514, 559, 624, 625, 626, 677, and 683 each coordinate ATP. Asp702 contributes to the Mg(2+) binding site. Asn705 contributes to the ATP binding site. Residues 757 to 776 form a helical membrane-spanning segment; the sequence is KQFIRYLISSNVGEVVCIFL. The Ca(2+) site is built by Asn767 and Glu770. The Lumenal portion of the chain corresponds to 777-786; the sequence is TAALGFPEAL. A helical membrane pass occupies residues 787 to 807; the sequence is IPVQLLWVNLVTDGLPATALG. The tract at residues 787 to 807 is interaction with PLN; the sequence is IPVQLLWVNLVTDGLPATALG. Residues Asn795, Thr798, and Asp799 each coordinate Ca(2+). Topologically, residues 808–827 are cytoplasmic; sequence FNPPDLDIMNKPPRNPKEPL. The chain crosses the membrane as a helical span at residues 828 to 850; sequence ISGWLFFRYLAIGCYVGAATVGA. Residues 851–896 lie on the Lumenal side of the membrane; that stretch reads AAWWFIAADGGPRVTFYQLSHFLQCKEDNPDFSGVDCVVFESPYPM. Cysteines 875 and 887 form a disulfide. A helical membrane pass occupies residues 897–916; the sequence is TMALSVLVTIEMCNALNSLS. Glu907 lines the Ca(2+) pocket. At 917–929 the chain is on the cytoplasmic side; the sequence is ENQSLMRMPPWEN. A helical membrane pass occupies residues 930 to 948; the sequence is IWLVGAICLSMSLHFLILY. Positions 931–942 are interaction with PLN; that stretch reads WLVGAICLSMSL. Residues 949 to 963 are Lumenal-facing; it reads VEPLPIIFQITPLNV. The chain crosses the membrane as a helical span at residues 964–984; that stretch reads TQWLMVLKISLPVILLDETLK. Over 985 to 1041 the chain is Cytoplasmic; the sequence is YVARNYLEPGKDSVQPATKPCSLSACTEGVSWPFVFITLPLVIWLYSTDTNFSDMFW.

The protein belongs to the cation transport ATPase (P-type) (TC 3.A.3) family. Type IIA subfamily. In terms of assembly, interacts with sarcolipin (SLN). Interacts with phospholamban (PLN). Interacts with myoregulin (MRLN). Interacts with DWORF. Interacts with TMX2. The cofactor is Mg(2+). In terms of tissue distribution, only isoform 2 is detected in heart, while both isoforms are expressed in brain, with isoform 2 being predominant.

It localises to the endoplasmic reticulum membrane. The protein localises to the sarcoplasmic reticulum membrane. It catalyses the reaction Ca(2+)(in) + ATP + H2O = Ca(2+)(out) + ADP + phosphate + H(+). With respect to regulation, reversibly inhibited by phospholamban (PLN) at low calcium concentrations. Inhibited by sarcolipin (SLN) and myoregulin (MRLN). Enhanced by DWORF; DWORF increases activity by displacing sarcolipin (SLN), phospholamban (PLN) and myoregulin (MRLN). This magnesium-dependent enzyme catalyzes the hydrolysis of ATP coupled with the translocation of calcium from the cytosol to the sarcoplasmic reticulum lumen. Isoform SERCA2A is involved in the regulation of the contraction/relaxation cycle. May act as a regulator of TNFSF11-mediated Ca(2+) signaling during osteoclastogenesis. The polypeptide is Sarcoplasmic/endoplasmic reticulum calcium ATPase 2 (ATP2A2) (Gallus gallus (Chicken)).